Reading from the N-terminus, the 456-residue chain is uncharacterized protein (456 aa).

The protein belongs to the herpesviridae UL49 family.

This is an uncharacterized protein from Equus caballus (Horse).